The sequence spans 122 residues: Large ribosomal subunit protein uL14 (122 aa).

The protein belongs to the universal ribosomal protein uL14 family. In terms of assembly, part of the 50S ribosomal subunit. Forms a cluster with proteins L3 and L19. In the 70S ribosome, L14 and L19 interact and together make contacts with the 16S rRNA in bridges B5 and B8.

Its function is as follows. Binds to 23S rRNA. Forms part of two intersubunit bridges in the 70S ribosome. The protein is Large ribosomal subunit protein uL14 of Desulforudis audaxviator (strain MP104C).